The following is a 113-amino-acid chain: MTMNITSKQMEITPAIRQHVADRLAKLEKWQTHLINPHIILSKEPQGFVADATINTPNGVLVASGKHEDMYTAINELINKLERQLNKLQHKGEARRAATSVKDANFVEEVEEE.

Residue K66 is modified to N6-acetyllysine. Positions 91–113 are disordered; the sequence is KGEARRAATSVKDANFVEEVEEE.

It belongs to the HPF/YfiA ribosome-associated protein family. YfiA subfamily. As to quaternary structure, associates mainly with 70S ribosomes.

During stationary phase, prevents 70S dimer formation, probably in order to regulate translation efficiency during transition between the exponential and the stationary phases. In addition, during environmental stress such as cold shock or excessive cell density at stationary phase, stabilizes the 70S ribosome against dissociation, inhibits translation initiation and increase translation accuracy. When normal growth conditions are restored, is quickly released from the ribosome. This chain is Ribosome-associated factor Y, found in Escherichia coli O157:H7.